A 780-amino-acid chain; its full sequence is MGHSVAWLLLVAAASTLAAEVPTDVSMGLLAEPQVAMFCGKINMHINVQSGKWEPDPSGTKSCIGTKEGILQYCQEVYPELQITNVVEANQPVSIQNWCKKGRKQCRSHMHIVVPYRCLVGEFVSDALLVPDKCKFLHQERMNQCESHLHWHTVAKESCGDRAMNLHDYGMLLPCGIDRFRGVEFVCCPAEAERDMDSTEKDADDSDVWWGGADNDYSDNSMVREPEPAEQQEETRPSVVEEEEEGEVAQEDDEEEEEVLDTDQDGDGEEDHEAADDEEEEEDVDEIDAFGESDDVDADEPTTNVAMTTTTTTTTTESVEEVVRMFCWAHADTGPCTASMPSWYFDAVDGRTMYELMYGGCGGNMNNFESEEYCLSVCSSVVPTDMPSSPDAVDHYLETPADENEHAHFQKAKESLEAKHRERMSQVMREWEEAERQAKNLPRADKKIVIQRFQEKVEALEQEAASERQQLVETHMARVEALLNDRRRLALENYLTALQQDPPRPRHVFSLLKKYVRAEQKDRQHTLKHFEHVRMVDPKKAAQIRPQVLTHLRVIEERMNQSLGLLYKVPGVADDIQDQVELLQREQAEMAQQLANLQTDVRVSYGNDALMPDQELGDGQADLLPQEDTLGGVGFVHPESFNQLNTENQVEPVDSRPTFERGVPTRPVTGKSMEAVPELRMETEDRQSTEYEVHHQKLVFFAEDVGSNKGAIIGLMVGGVVIATVIVITLVMLRKKQYTSIHHGIIEVDAAVTPEERHLSKMQQNGYENPTYKFFEQMQN.

The first 18 residues, 1–18, serve as a signal peptide directing secretion; it reads MGHSVAWLLLVAAASTLA. Residues 19–711 lie on the Extracellular side of the membrane; that stretch reads AEVPTDVSMG…AEDVGSNKGA (693 aa). The segment at 29–124 is GFLD subdomain; it reads LLAEPQVAMF…PYRCLVGEFV (96 aa). The E1 domain maps to 29–190; that stretch reads LLAEPQVAMF…RGVEFVCCPA (162 aa). Intrachain disulfides connect Cys-39/Cys-63, Cys-74/Cys-118, Cys-99/Cys-106, Cys-134/Cys-188, Cys-145/Cys-175, and Cys-159/Cys-187. Residues 132–190 form a cuBD subdomain region; sequence DKCKFLHQERMNQCESHLHWHTVAKESCGDRAMNLHDYGMLLPCGIDRFRGVEFVCCPA. Cu cation contacts are provided by His-148, His-152, and Tyr-169. Residues 194–316 are disordered; sequence RDMDSTEKDA…MTTTTTTTTT (123 aa). The segment covering 240–300 has biased composition (acidic residues); that stretch reads VEEEEEGEVA…GESDDVDADE (61 aa). A compositionally biased stretch (low complexity) spans 301-316; the sequence is PTTNVAMTTTTTTTTT. The BPTI/Kunitz inhibitor domain maps to 323-382; it reads VRMFCWAHADTGPCTASMPSWYFDAVDGRTMYELMYGGCGGNMNNFESEEYCLSVCSSVV. 2 cysteine pairs are disulfide-bonded: Cys-327/Cys-378 and Cys-336/Cys-361. One can recognise an E2 domain in the interval 392 to 583; that stretch reads AVDHYLETPA…DDIQDQVELL (192 aa). A glycan (N-linked (GlcNAc...) asparagine) is linked at Asn-560. The segment at 648–669 is disordered; that stretch reads NQVEPVDSRPTFERGVPTRPVT. A helical membrane pass occupies residues 712-732; sequence IIGLMVGGVVIATVIVITLVM. The Cytoplasmic segment spans residues 733 to 780; sequence LRKKQYTSIHHGIIEVDAAVTPEERHLSKMQQNGYENPTYKFFEQMQN. The short motif at 767–772 is the YENPXY motif element; that stretch reads YENPTY. The interval 769-772 is clathrin-binding; the sequence is NPTY.

It belongs to the APP family.

The protein localises to the membrane. In terms of biological role, functional neuronal receptor which couples to intracellular signaling pathway through the GTP-binding protein G(O). The polypeptide is Amyloid-beta A4 protein (app) (Dichotomyctere fluviatilis (Green pufferfish)).